Here is an 873-residue protein sequence, read N- to C-terminus: Paramyosin (873 aa).

The interval 1–25 (MSSRSSKYMYKSSGGAGDISIEYGT) is nonhelical region. Residues 26-852 (DLGALTRLED…IRAKHRSWVT (827 aa)) adopt a coiled-coil conformation. A nonhelical region region spans residues 853–873 (TSQVPGGTRQVFVTEESSQNF).

Belongs to the paramyosin family. Homodimer. Binds IgG and collagen. As to expression, expressed in all tissues except in saliva.

It localises to the cytoplasm. Its subcellular location is the myofibril. Functionally, paramyosin is a major structural component of many thick filaments isolated from invertebrate muscles. The chain is Paramyosin (PRM) from Rhipicephalus microplus (Cattle tick).